The chain runs to 88 residues: Cell division topological specificity factor (88 aa).

Belongs to the MinE family.

Its function is as follows. Prevents the cell division inhibition by proteins MinC and MinD at internal division sites while permitting inhibition at polar sites. This ensures cell division at the proper site by restricting the formation of a division septum at the midpoint of the long axis of the cell. The protein is Cell division topological specificity factor of Acidovorax ebreus (strain TPSY) (Diaphorobacter sp. (strain TPSY)).